Reading from the N-terminus, the 259-residue chain is Global transcriptional regulator CodY (259 aa).

The tract at residues 1 to 155 (MALLQKTRII…GATVVGMEIL (155 aa)) is GAF domain. The H-T-H motif DNA-binding region spans 203–222 (ASKIADRVGITRSVIVNALR). A Phosphoserine modification is found at Ser215.

It belongs to the CodY family.

The protein resides in the cytoplasm. DNA-binding global transcriptional regulator which is involved in the adaptive response to starvation and acts by directly or indirectly controlling the expression of numerous genes in response to nutrient availability. During rapid exponential growth, CodY is highly active and represses genes whose products allow adaptation to nutrient depletion. This chain is Global transcriptional regulator CodY, found in Bacillus pumilus (strain SAFR-032).